Reading from the N-terminus, the 631-residue chain is Fatty acid ABC transporter ATP-binding/permease protein (631 aa).

Residues 1 to 11 (MTAPPGARPRA) are compositionally biased toward low complexity. The interval 1–20 (MTAPPGARPRAASPPPNMRS) is disordered. Helical transmembrane passes span 42–62 (IAVITLGIAGTTIGVIVPRIL), 123–143 (LALALALYLAAALMIWAQARL), and 205–225 (ILTMVAVLAMMVSISGLLALI). Residues 42–365 (IAVITLGIAG…LAGMYNALQS (324 aa)) enclose the ABC transmembrane type-1 domain. Positions 397–631 (VEFEHVNFAY…RGVYYQMTRA (235 aa)) constitute an ABC transporter domain. Residue 430–437 (GPTGAGKT) coordinates ATP.

It belongs to the ABC transporter superfamily. Lipid exporter (TC 3.A.1.106) family.

It localises to the cell inner membrane. ABC transporter involved in fatty acid import. Transmembrane domains (TMD) form a pore in the membrane and the ATP-binding domain (NBD) is responsible for energy generation. The protein is Fatty acid ABC transporter ATP-binding/permease protein of Mycobacterium bovis (strain ATCC BAA-935 / AF2122/97).